A 708-amino-acid polypeptide reads, in one-letter code: Ribosomal RNA large subunit methyltransferase K/L (708 aa).

The THUMP domain occupies 43–154 (QGYQITLWTR…RGKITIGINF (112 aa)).

The protein belongs to the methyltransferase superfamily. RlmKL family.

Its subcellular location is the cytoplasm. The enzyme catalyses guanosine(2445) in 23S rRNA + S-adenosyl-L-methionine = N(2)-methylguanosine(2445) in 23S rRNA + S-adenosyl-L-homocysteine + H(+). It carries out the reaction guanosine(2069) in 23S rRNA + S-adenosyl-L-methionine = N(2)-methylguanosine(2069) in 23S rRNA + S-adenosyl-L-homocysteine + H(+). Specifically methylates the guanine in position 2445 (m2G2445) and the guanine in position 2069 (m7G2069) of 23S rRNA. In Shewanella amazonensis (strain ATCC BAA-1098 / SB2B), this protein is Ribosomal RNA large subunit methyltransferase K/L.